The sequence spans 605 residues: Inactive LRR receptor-like serine/threonine-protein kinase BIR2 (605 aa).

The first 28 residues, 1-28 (MKEIGSKPRKLLPLCFIIFLCFCSSVMA), serve as a signal peptide directing secretion. Residues 29 to 229 (ADEDDIRCLR…CGGLSKKNLG (201 aa)) are Extracellular-facing. Asn-58 is a glycosylation site (N-linked (GlcNAc...) asparagine). LRR repeat units lie at residues 101 to 125 (CASL…LCNW), 127 to 150 (PFLV…LAKC), 152 to 173 (FVNS…QFSA), and 174 to 197 (LGRL…FFSS). Residues 230–250 (IIIAAGVFGAAASMLLAFGIW) traverse the membrane as a helical segment. The Cytoplasmic portion of the chain corresponds to 251-605 (WYYHLKWTRR…IFDTQENEKV (355 aa)). Position 271 is a phosphoserine; by BAK1 (Ser-271). Thr-283 is subject to Phosphothreonine; by BAK1. Ser-286 is subject to Phosphoserine; by BAK1. Residue Thr-304 is modified to Phosphothreonine; by BAK1. The 272-residue stretch at 307–578 (FNSENIIVST…FQAYQSLKAI (272 aa)) folds into the Protein kinase domain. 313-321 (IVSTRTGTT) contributes to the ATP binding site. The residue at position 330 (Ser-330) is a Phosphoserine; by BAK1. An ATP-binding site is contributed by Lys-335. At Ser-389 the chain carries Phosphoserine; by BAK1. The residue at position 402 (Thr-402) is a Phosphothreonine. A phosphoserine; by BAK1 mark is found at Ser-448 and Ser-462. Thr-466 is subject to Phosphothreonine; by BAK1. A Phosphotyrosine modification is found at Tyr-479. Thr-482 carries the post-translational modification Phosphothreonine. Position 486 is a phosphoserine (Ser-486). Thr-533 carries the phosphothreonine; by BAK1 modification.

It belongs to the protein kinase superfamily. Ser/Thr protein kinase family. Interacts constitutively with BAK1, when phosphorylated, thereby preventing interaction with the ligand-binding LRR-RLK FLS2. Upon infection, pathogen-associated molecular patterns (PAMP) perception leads to BIR2 release from the BAK1 complex and enables the recruitment of BAK1 into the FLS2 complex. In terms of processing, phosphorylated by BAK1, this interacts promotes interaction with BAK1.

The protein localises to the cell membrane. In terms of biological role, pseudokinases lacking protein kinase activity and unable to bind ATP-analogs. Negative regulator of pathogen-associated molecular patterns- (PAMP-) triggered immunity by limiting BAK1-receptor complex formation in the absence of ligands. This is Inactive LRR receptor-like serine/threonine-protein kinase BIR2 from Arabidopsis thaliana (Mouse-ear cress).